The sequence spans 547 residues: Chaperonin GroEL (547 aa).

Residues threonine 30 to proline 33, lysine 51, aspartate 87 to threonine 91, glycine 415, asparagine 479 to alanine 481, and aspartate 495 each bind ATP. Residues lysine 526 to methionine 547 are disordered. Residues glycine 538 to methionine 547 show a composition bias toward gly residues.

It belongs to the chaperonin (HSP60) family. Forms a cylinder of 14 subunits composed of two heptameric rings stacked back-to-back. Interacts with the co-chaperonin GroES.

The protein resides in the cytoplasm. It carries out the reaction ATP + H2O + a folded polypeptide = ADP + phosphate + an unfolded polypeptide.. Together with its co-chaperonin GroES, plays an essential role in assisting protein folding. The GroEL-GroES system forms a nano-cage that allows encapsulation of the non-native substrate proteins and provides a physical environment optimized to promote and accelerate protein folding. This is Chaperonin GroEL from Buchnera aphidicola subsp. Tetraneura caerulescens.